The following is a 396-amino-acid chain: 1-deoxy-D-xylulose 5-phosphate reductoisomerase (396 aa).

NADPH contacts are provided by threonine 10, glycine 11, serine 12, isoleucine 13, and asparagine 123. Lysine 124 contacts 1-deoxy-D-xylulose 5-phosphate. Position 125 (glutamate 125) interacts with NADPH. Mn(2+) is bound at residue aspartate 149. 1-deoxy-D-xylulose 5-phosphate-binding residues include serine 150, glutamate 151, serine 185, and histidine 208. Residue glutamate 151 participates in Mn(2+) binding. Glycine 214 provides a ligand contact to NADPH. 1-deoxy-D-xylulose 5-phosphate is bound by residues serine 221, asparagine 226, lysine 227, and glutamate 230. Glutamate 230 is a Mn(2+) binding site.

Belongs to the DXR family. Mg(2+) is required as a cofactor. The cofactor is Mn(2+).

It catalyses the reaction 2-C-methyl-D-erythritol 4-phosphate + NADP(+) = 1-deoxy-D-xylulose 5-phosphate + NADPH + H(+). It functions in the pathway isoprenoid biosynthesis; isopentenyl diphosphate biosynthesis via DXP pathway; isopentenyl diphosphate from 1-deoxy-D-xylulose 5-phosphate: step 1/6. Catalyzes the NADPH-dependent rearrangement and reduction of 1-deoxy-D-xylulose-5-phosphate (DXP) to 2-C-methyl-D-erythritol 4-phosphate (MEP). In Shewanella sp. (strain ANA-3), this protein is 1-deoxy-D-xylulose 5-phosphate reductoisomerase.